We begin with the raw amino-acid sequence, 268 residues long: Cell division coordinator CpoB (268 aa).

The first 21 residues, 1–21 (MRMCRRVVTVLALSLPLAAWA), serve as a signal peptide directing secretion. Positions 58–94 (QLFMQLQQMQDQLSRQQGIIEELQNDVSRMKQENLER) form a coiled coil. Positions 104–146 (SGAAPAATPDNSSGGGASNAAPDAAAGAAAQQPAGSSQPGDPA) are disordered. Low complexity predominate over residues 121–143 (SNAAPDAAAGAAAQQPAGSSQPG). TPR repeat units lie at residues 149-181 (KLYYDAAFDLIKQKDFDKASQAFNAFLRKYPNS), 185-218 (GNAQYWLGEVNLAKGDLQGASQAFAQVSQKYPKH), and 222-255 (PDSLYKLADVERRMGHTDKVKGILQQVVTQYPGT).

Belongs to the CpoB family.

Its subcellular location is the periplasm. In terms of biological role, mediates coordination of peptidoglycan synthesis and outer membrane constriction during cell division. This is Cell division coordinator CpoB from Pseudomonas putida (strain ATCC 47054 / DSM 6125 / CFBP 8728 / NCIMB 11950 / KT2440).